Here is a 629-residue protein sequence, read N- to C-terminus: tRNA uridine 5-carboxymethylaminomethyl modification enzyme MnmG (629 aa).

13 to 18 (GGGHAG) serves as a coordination point for FAD. 273-287 (GPRYCPSIEDKIHRF) provides a ligand contact to NAD(+).

This sequence belongs to the MnmG family. In terms of assembly, homodimer. Heterotetramer of two MnmE and two MnmG subunits. It depends on FAD as a cofactor.

The protein localises to the cytoplasm. NAD-binding protein involved in the addition of a carboxymethylaminomethyl (cmnm) group at the wobble position (U34) of certain tRNAs, forming tRNA-cmnm(5)s(2)U34. This Shewanella baltica (strain OS185) protein is tRNA uridine 5-carboxymethylaminomethyl modification enzyme MnmG.